A 283-amino-acid chain; its full sequence is ACT domain-containing protein DS12, chloroplastic (283 aa).

Residues 1–56 (MAEMAVTAALRPCSGVSPAVSGTSHRRRRPAAWRALAPPPPHAGLRLSSPAVRVPR) constitute a chloroplast transit peptide. The segment at 14–78 (SGVSPAVSGT…SNTDTVPTPK (65 aa)) is disordered. Over residues 48-63 (SSPAVRVPRAASSAAV) the composition is skewed to low complexity. 2 consecutive ACT domains span residues 91–171 (IVEI…ASSQ) and 206–276 (LLVV…LRRP).

Its subcellular location is the plastid. It is found in the chloroplast. The polypeptide is ACT domain-containing protein DS12, chloroplastic (Oryza sativa subsp. indica (Rice)).